Consider the following 445-residue polypeptide: Methionine aminopeptidase 2-3 (445 aa).

A disordered region spans residues 14 to 115 (ISDADANGAD…ENRYRTTSEE (102 aa)). Over residues 38–47 (EDDDSDDDVA) the composition is skewed to acidic residues. Over residues 60–75 (AKKKKNKKRKPKKKQP) the composition is skewed to basic residues. Positions 85-95 (PLSQLFPNNTY) are enriched in polar residues. The segment covering 97–115 (KGEEVEYKDENRYRTTSEE) has biased composition (basic and acidic residues). A substrate-binding site is contributed by histidine 198. The a divalent metal cation site is built by aspartate 218, aspartate 229, and histidine 298. Histidine 306 is a binding site for substrate. A divalent metal cation-binding residues include glutamate 331 and glutamate 426.

It belongs to the peptidase M24A family. Methionine aminopeptidase eukaryotic type 2 subfamily. Co(2+) serves as cofactor. Requires Zn(2+) as cofactor. The cofactor is Mn(2+). It depends on Fe(2+) as a cofactor.

It localises to the cytoplasm. It carries out the reaction Release of N-terminal amino acids, preferentially methionine, from peptides and arylamides.. Cotranslationally removes the N-terminal methionine from nascent proteins. The N-terminal methionine is often cleaved when the second residue in the primary sequence is small and uncharged (Met-Ala-, Cys, Gly, Pro, Ser, Thr, or Val). This chain is Methionine aminopeptidase 2-3, found in Neosartorya fischeri (strain ATCC 1020 / DSM 3700 / CBS 544.65 / FGSC A1164 / JCM 1740 / NRRL 181 / WB 181) (Aspergillus fischerianus).